Here is a 439-residue protein sequence, read N- to C-terminus: Xylose isomerase (439 aa).

Residues His-101 and Asp-104 contribute to the active site. Mg(2+)-binding residues include Glu-232, Glu-268, His-271, Asp-296, Asp-307, Asp-309, and Asp-339.

The protein belongs to the xylose isomerase family. In terms of assembly, homotetramer. Mg(2+) is required as a cofactor.

Its subcellular location is the cytoplasm. It catalyses the reaction alpha-D-xylose = alpha-D-xylulofuranose. This Haemophilus influenzae (strain PittGG) protein is Xylose isomerase.